We begin with the raw amino-acid sequence, 604 residues long: Tyrosine-protein kinase transforming protein erbB (604 aa).

A Protein kinase domain is found at 132-399 (FKKVKVLGSG…KMARDPPRYL (268 aa)). Residues 138–146 (LGSGAFGTI) and Lys-165 each bind ATP. Asp-257 functions as the Proton acceptor in the catalytic mechanism.

The protein belongs to the protein kinase superfamily. Tyr protein kinase family. EGF receptor subfamily.

The enzyme catalyses L-tyrosyl-[protein] + ATP = O-phospho-L-tyrosyl-[protein] + ADP + H(+). Functionally, the v-erbB oncogene transforms avian fibroblasts and erythroblasts in culture and induces sarcomas and erythroleukemias in chickens. It is a truncated and mutated version of the receptor for epidermal growth factor. This is Tyrosine-protein kinase transforming protein erbB (V-ERBB) from Galliformes.